Consider the following 1651-residue polypeptide: Actin remodeling regulator NHS (1651 aa).

Disordered regions lie at residues 1 to 104 (MPFA…EAAP), 235 to 274 (QALR…SQRR), and 288 to 314 (TRSP…DEDT). The interval 1 to 262 (MPFAKRIVEP…AAPLSIAAPP (262 aa)) is WAVE homology domain (WHD). The span at 65-76 (SGLPPPPPPLPA) shows a compositional bias: pro residues. A phosphothreonine mark is found at T332 and T401. A Phosphoserine modification is found at S415. Disordered regions lie at residues 494–598 (FTPA…DISS) and 620–669 (HMDQ…ELSL). Basic and acidic residues predominate over residues 507 to 521 (LPREGNRGGDAEPKV). Residue S533 is modified to Phosphoserine. The segment covering 548–558 (APSSPSAQDHQ) has biased composition (polar residues). Low complexity predominate over residues 629–648 (SSSGNWSGSSSTCPSQTSET). A compositionally biased stretch (polar residues) spans 657-669 (LTGSSHCDSELSL). Position 739 is a phosphoserine (S739). 3 disordered regions span residues 835 to 888 (QGRP…SREM), 980 to 1004 (SPES…PSVD), and 1017 to 1071 (GLAS…LKDG). The span at 859–874 (RKSDGNADISEKKEPK) shows a compositional bias: basic and acidic residues. Over residues 980–993 (SPESSESQTSQSES) the composition is skewed to low complexity. Polar residues predominate over residues 1020–1037 (SPSSGYSSQSETPTSSFP). S1176 is subject to Phosphoserine. T1262 is subject to Phosphothreonine. S1329 is subject to Phosphoserine. Disordered regions lie at residues 1383-1436 (ISAK…VSPN), 1454-1509 (KVLG…NAKK), and 1526-1651 (SRSD…QSST). Low complexity-rich tracts occupy residues 1408-1423 (ESSP…LSED) and 1465-1496 (SVRS…TPNS). The residue at position 1499 (S1499) is a Phosphoserine. Positions 1555 to 1568 (ESPQSTDDAHQGSQ) are enriched in polar residues. Residues 1588–1618 (FSSKSFATSASARVGRSRAPPAASSSRYSVR) are compositionally biased toward low complexity. Residues 1640-1651 (SPHDDRSSQSST) show a composition bias toward basic and acidic residues.

It belongs to the NHS family. As to quaternary structure, interacts with the tight junction protein TJP1/ZO-1. Associates with actin-rich structures. Interacts with BRK1 and with all three members of the WAVE protein family, WASF1, WASF2 and WASF3. As to expression, detected at low levels in all tissues analyzed. Detected in fetal and adult brain, lens, retina, retinal pigment epithelium, placenta, lymphocytes and fibroblasts. Levels in retinal pigment epithelium, placenta, lymphocytes, and fibroblasts are very low. Expressed also in kidney, lung and thymus.

It localises to the apical cell membrane. The protein resides in the cell projection. The protein localises to the lamellipodium. Its subcellular location is the cell junction. It is found in the tight junction. It localises to the focal adhesion. The protein resides in the cytoplasm. May function in cell morphology by maintaining the integrity of the circumferential actin ring and controlling lamellipod formation. Involved in the regulation eye, tooth, brain and craniofacial development. The sequence is that of Actin remodeling regulator NHS (NHS) from Homo sapiens (Human).